We begin with the raw amino-acid sequence, 301 residues long: Putative ribosomal RNA methyltransferase PB17E12.10c (301 aa).

Residues glycine 87, tryptophan 89, aspartate 107, and aspartate 186 each contribute to the S-adenosyl-L-methionine site. Lysine 247 functions as the Proton acceptor in the catalytic mechanism.

It belongs to the class I-like SAM-binding methyltransferase superfamily. RNA methyltransferase RlmE family.

It carries out the reaction a uridine in rRNA + S-adenosyl-L-methionine = a 2'-O-methyluridine in rRNA + S-adenosyl-L-homocysteine + H(+). The chain is Putative ribosomal RNA methyltransferase PB17E12.10c from Schizosaccharomyces pombe (strain 972 / ATCC 24843) (Fission yeast).